The following is a 1224-amino-acid chain: MGHSHSTGKEINDNELFTCEDPVFDQPVASPKSEISSKLAEEIERSKSPLILEVSPRTPDSVQMFRPTFDTFRPPNSDSSTFRGSQSREDLVACSSMNSVNNVHDMNTVSSSSSSSAPLFVALYDFHGVGEEQLSLRKGDQVRILGYNKNNEWCEARLYSTRKNDASNQRRLGEIGWVPSNFIAPYNSLDKYTWYHGKISRSDSEAILGSGITGSFLVRESETSIGQYTISVRHDGRVFHYRINVDNTEKMFITQEVKFRTLGELVHHHSVHADGLICLLMYPASKKDKGRGLFSLSPNAPDEWELDRSEIIMHNKLGGGQYGDVYEGYWKRHDCTIAVKALKEDAMPLHEFLAEAAIMKDLHHKNLVRLLGVCTHEAPFYIITEFMCNGNLLEYLRRTDKSLLPPIILVQMASQIASGMSYLEARHFIHRDLAARNCLVSEHNIVKIADFGLARFMKEDTYTAHAGAKFPIKWTAPEGLAFNTFSSKSDVWAFGVLLWEIATYGMAPYPGVELSNVYGLLENGFRMDGPQGCPPSVYRLMLQCWNWSPSDRPRFRDIHFNLENLISSNSLNDEVQKQLKKNNDKKLESDKRRSNVRERSDSKSRHSSHHDRDRDRESLHSRNSNPEIPNRSFIRTDDSVSFFNPSTTSKVTSFRAQGPPFPPPPQQNTKPKLLKSVLNSNARHASEEFERNEQDDVVPLAEKNVRKAVTRLGGTMPKGQRIDAYLDSMRRVDSWKESTDADNEGAGSSSLSRTVSNDSLDTLPLPDSMNSSTYVKMHPASGENVFLRQIRSKLKKRSETPELDHIDSDTADETTKSEKSPFGSLNKSSIKYPIKNAPEFSENHSRVSPVPVPPSRNASVSVRPDSKAEDSSDETTKDVGMWGPKHAVTRKIEIVKNDSYPNVEGELKAKIRNLRHVPKEESNTSSQEDLPLDATDNTNDSIIVIPRDEKAKVRQLVTQKVSPLQHHRPFSLQCPNNSTSSAISHSEHADSSETSSLSGVYEERMKPELPRKRSNGDTKVVPVTWIINGEKEPNGMARTKSLRDITSKFEQLGTASTIESKIEEAVPYREHALEKKGTSKRFSMLEGSNELKHVVPPRKNRNQDESGSIDEEPVSKDMIVSLLKVIQKEFVNLFNLASSEITDEKLQQFVIMADNVQKLHSTCSVYAEQISPHSKFRFKELLSQLEIYNRQIKFSHNPRAKPVDDKLKMAFQDCFDQIMRLVDR.

Positions Ser-115 to Ser-188 constitute an SH3 domain. The SH2 domain occupies Trp-194–Ala-284. One can recognise a Protein kinase domain in the interval Ile-311–Leu-562. Residues Leu-317 to Val-325, Lys-340, and Glu-385 to Asn-391 each bind ATP. The active-site Proton acceptor is the Asp-432. Positions Asp-450–Trp-474 match the Kinase activation loop motif. The span at Leu-579–His-620 shows a compositional bias: basic and acidic residues. Disordered stretches follow at residues Leu-579–Pro-671, Lys-736–Val-775, Lys-796–Met-881, Leu-914–Asn-937, and Arg-968–Gly-1016. 2 stretches are compositionally biased toward polar residues: residues Ser-639–Arg-655 and Ala-746–Leu-760. Basic and acidic residues-rich tracts occupy residues Arg-797–Lys-819 and Pro-864–Lys-877. Over residues Gln-973–Ser-984 the composition is skewed to polar residues. A compositionally biased stretch (basic and acidic residues) spans Tyr-1001–Gly-1016.

The protein belongs to the protein kinase superfamily. Tyr protein kinase family. ABL subfamily. Interacts (via SH2 and SH3 domains) with mig-13; the interaction is direct. May interact with soem-1.

It localises to the cell membrane. The protein localises to the cytoplasm. It catalyses the reaction L-tyrosyl-[protein] + ATP = O-phospho-L-tyrosyl-[protein] + ADP + H(+). In terms of biological role, functions downstream of migratory protein mig-13 and is involved in Q neuroblast migration during larval development. Recruited by mig-13 to the leading edge of Q neuroblasts and their descendents to signal downstream, likely to the wve-1 pathway, and direct migration along the anteroposterior body axis. Promotes germline cell apoptosis in response to oxidative, osmotic and heat shock stresses. The sequence is that of Tyrosine-protein kinase abl-1 (abl-1) from Caenorhabditis elegans.